Consider the following 352-residue polypeptide: AP2/ERF and B3 domain-containing transcription factor At1g51120 (352 aa).

The segment at Met-1–Ser-20 is disordered. Positions Val-7–Ser-20 are enriched in polar residues. Residues Lys-46–Pro-103 constitute a DNA-binding region (AP2/ERF). The TF-B3 DNA-binding region spans Phe-178–His-297.

The protein belongs to the AP2/ERF transcription factor family. RAV subfamily.

It localises to the nucleus. Probably acts as a transcriptional activator. Binds to the GCC-box pathogenesis-related promoter element. May be involved in the regulation of gene expression by stress factors and by components of stress signal transduction pathways. This Arabidopsis thaliana (Mouse-ear cress) protein is AP2/ERF and B3 domain-containing transcription factor At1g51120.